Here is a 298-residue protein sequence, read N- to C-terminus: Fe(II)/2-oxoglutarate-dependent dioxygenase nvfF (298 aa).

3 residues coordinate Fe cation: His-137, Asp-139, and His-212.

The protein belongs to the PhyH family. In terms of assembly, homodimer. It depends on Fe cation as a cofactor.

It carries out the reaction fumigatonoid C + 2-oxoglutarate + O2 = novofumigatonin + succinate + CO2 + H2O. It functions in the pathway secondary metabolite biosynthesis; terpenoid biosynthesis. Fe(II)/2-oxoglutarate-dependent dioxygenase; part of the gene cluster that mediates the biosynthesis of novofumigatonin, a heavily oxygenated meroterpenoid containing a unique orthoester moiety. The first step of the pathway is the synthesis of 3,5-dimethylorsellinic acid (DMOA) by the polyketide synthase nvfA via condensation of one acetyl-CoA starter unit with 3 malonyl-CoA units and 2 methylations. DMOA is then converted to farnesyl-DMOA by the farnesyltransferase nvfB. Epoxydation by FAD-dependent monooxygenase nvfK, followed by a protonation-initiated cyclization catalyzed by the terpene cyclase nvfL leads to the production of asnavolin H. The short chain dehydrogenase nvfC then as a 3-OH dehydrogenase of asnovolin H to yield chemesin D. There are two branches to synthesize asnovolin A from chemesin D. In one branch, chemesin D undergoes Baeyer-Villiger oxidation by nvfH, methylation by nvfJ, and enoyl reduction by the nvfM D enoylreductase that reduces the double bond between C-5'and C-6', to form respectively asnovolin I, asnovolin K, and asnovolin A. In the other branch, the methylation precedes the Baeyer-Villiger oxidation and the enoyl reduction to yield asnovolin A via the asnovolin J intermediate. Asnovolin A is further converted to fumigatonoid A by the Fe(II)/2-oxoglutarate-dependent dioxygenase nvfI that catalyzes an endoperoxidation reaction. The alpha/beta hydrolase nvfD then acts as an epimerase that converts fumigatonoid A to its C-5' epimer, which then undergoes spontaneous or nvfD-catalyzed lactonization. The following step utilizes the ketoreductase nvfG to produce fumigatonoid B. The dioxygenase nvfE further converts fumigatonoid B into fumigatonoid C. Finally the Fe(II)/2-oxoglutarate-dependent dioxygenase nvfF catalyzes two rounds of oxidation to transform fumigatonoid C into the end product, novofumigatonin A. This is Fe(II)/2-oxoglutarate-dependent dioxygenase nvfF from Aspergillus novofumigatus (strain IBT 16806).